Here is a 410-residue protein sequence, read N- to C-terminus: 2-oxoglutarate-dependent dioxygenase AOP3 (410 aa).

One can recognise a Fe2OG dioxygenase domain in the interval Gly258–Pro355. Residues His278, Asp280, and His335 each contribute to the Fe cation site. 2-oxoglutarate is bound at residue Arg346.

This sequence belongs to the iron/ascorbate-dependent oxidoreductase family. Requires Fe(2+) as cofactor.

In terms of biological role, 2-oxoglutarate-dependent dioxygenase involved in glucosinolates biosynthesis. Catalyzes the conversion of methylsulfinylalkyl glucosinolates to hydroxyalkyl glucosinolates. This chain is 2-oxoglutarate-dependent dioxygenase AOP3 (AOP3), found in Arabidopsis thaliana (Mouse-ear cress).